Consider the following 236-residue polypeptide: MADS-box transcription factor 3 (236 aa).

The MADS-box domain maps to 1–61 (MGRGKIEIKR…GRLYEYANNS (61 aa)). Residues 87 to 178 (AQHYQQESSK…RSKVVENERG (92 aa)) enclose the K-box domain.

Expressed in lemmas, paleas and lodicules.

The protein localises to the nucleus. Its function is as follows. Probable transcription factor involved in the development of floral organs. Acts as C-class protein in association with MADS58. Involved in the control of lodicule number (whorl 2), stamen specification (whorl 3) and floral meristem determinacy (whorl 4), but not in the regulation of carpel morphogenesis. Plays a more predominant role in controlling lodicule development and in specifying stamen identity than MADS58. The polypeptide is MADS-box transcription factor 3 (MADS3) (Oryza sativa subsp. japonica (Rice)).